The sequence spans 203 residues: MALIIGLTGGIGSGKTRAADSFRELGIEIIDTDQIAHELTRSAGKAISPIRIAFGDCFILDDGSLDRSAMRRLVFSDETARHRLESILHPLIYQETLQRLPLIQSEYGIVVVPLLLEIDGYLKLVDRVLVIDCPEPLQISRTMLRSKLSEQEVRDVMAVQCSRDKRLAQADDVIVNDSGEQHLQRQVEELHRKYLMLARKHGL.

A DPCK domain is found at 4 to 201 (IIGLTGGIGS…RKYLMLARKH (198 aa)). 12-17 (GSGKTR) contributes to the ATP binding site.

The protein belongs to the CoaE family.

It localises to the cytoplasm. The enzyme catalyses 3'-dephospho-CoA + ATP = ADP + CoA + H(+). The protein operates within cofactor biosynthesis; coenzyme A biosynthesis; CoA from (R)-pantothenate: step 5/5. Functionally, catalyzes the phosphorylation of the 3'-hydroxyl group of dephosphocoenzyme A to form coenzyme A. This Nitrosomonas europaea (strain ATCC 19718 / CIP 103999 / KCTC 2705 / NBRC 14298) protein is Dephospho-CoA kinase.